Here is a 221-residue protein sequence, read N- to C-terminus: Small ribosomal subunit protein uS4c (221 aa).

The segment at Arg26–Lys53 is disordered. The segment covering Gln37 to Lys53 has biased composition (basic residues). The S4 RNA-binding domain occupies Met103–Leu161.

The protein belongs to the universal ribosomal protein uS4 family. In terms of assembly, part of the 30S ribosomal subunit. Contacts protein S5. The interaction surface between S4 and S5 is involved in control of translational fidelity.

The protein resides in the plastid. It localises to the chloroplast. In terms of biological role, one of the primary rRNA binding proteins, it binds directly to 16S rRNA where it nucleates assembly of the body of the 30S subunit. Functionally, with S5 and S12 plays an important role in translational accuracy. The protein is Small ribosomal subunit protein uS4c (rps4) of Pleurastrum terricola (Filamentous green alga).